The primary structure comprises 312 residues: Deoxyribonuclease-1-like 1 (312 aa).

The first 35 residues, 1–35, serve as a signal peptide directing secretion; it reads MPSGQPVFPRRVPDAYIAMRGLVVASLLILLVGGT. N-linked (GlcNAc...) asparagine glycosylation occurs at asparagine 102. Residue glutamate 113 is part of the active site. The N-linked (GlcNAc...) asparagine glycan is linked to asparagine 133. The active site involves histidine 164. An intrachain disulfide couples cysteine 203 to cysteine 240. N-linked (GlcNAc...) asparagine glycosylation is present at asparagine 239.

This sequence belongs to the DNase I family.

Its subcellular location is the endoplasmic reticulum. This Rattus norvegicus (Rat) protein is Deoxyribonuclease-1-like 1 (Dnase1l1).